Here is a 334-residue protein sequence, read N- to C-terminus: B1 bradykinin receptor (334 aa).

The tract at residues 1–21 (MASQASLKLQPSNQSQQAPPN) is disordered. Residues 1–41 (MASQASLKLQPSNQSQQAPPNITSCEGAPEAWDLLCRVLPG) lie on the Extracellular side of the membrane. Low complexity predominate over residues 10-21 (QPSNQSQQAPPN). N-linked (GlcNAc...) asparagine glycosylation is found at Asn13 and Asn21. Residues 42 to 62 (FVITVCFFGLLGNLLVLSFFL) traverse the membrane as a helical segment. Residues 63–80 (LPWRRWWQQRRQRLTIAE) are Cytoplasmic-facing. The chain crosses the membrane as a helical span at residues 81-101 (IYLANLAASDLVFVLGLPFWA). The Extracellular segment spans residues 102–118 (ENVGNRFNWPFGSDLCR). The cysteines at positions 117 and 196 are disulfide-linked. Residues 119 to 139 (VVSGVIKANLFISIFLVVAIS) traverse the membrane as a helical segment. The Cytoplasmic segment spans residues 140 to 161 (QDRYRLLVYPMTSWGNRRRRQA). Residues 162–182 (QVTCLLIWVAGGLLSTPTFLL) form a helical membrane-spanning segment. The Extracellular segment spans residues 183 to 214 (RSVKVVPDLNISACILLFPHEAWHFVRMVELN). Asn192 carries an N-linked (GlcNAc...) asparagine glycan. The chain crosses the membrane as a helical span at residues 215 to 235 (VLGFLLPLAAILYFNFHILAS). Residues 236–258 (LRGQKEASRTRCGGPKDSKTMGL) are Cytoplasmic-facing. A helical membrane pass occupies residues 259 to 279 (ILTLVASFLVCWAPYHFFAFL). Over 280–302 (DFLVQVRVIQDCFWKELTDLGLQ) the chain is Extracellular. Residues 303–323 (LANFFAFVNSCLNPLIYVFAG) form a helical membrane-spanning segment. Over 324-334 (RLFKTRVLGTL) the chain is Cytoplasmic.

Belongs to the G-protein coupled receptor 1 family. Bradykinin receptor subfamily. BDKRB1 sub-subfamily. As to expression, expressed in heart, liver and lung.

It is found in the cell membrane. This is a receptor for bradykinin. Could be a factor in chronic pain and inflammation. This Mus musculus (Mouse) protein is B1 bradykinin receptor (Bdkrb1).